The chain runs to 137 residues: Cofilin-1A (137 aa).

An ADF-H domain is found at 2–135 (SSGIALAPNC…KDSCFYEKCT (134 aa)).

This sequence belongs to the actin-binding proteins ADF family.

It localises to the nucleus matrix. The protein resides in the cytoplasm. The protein localises to the cytoskeleton. Functionally, controls reversibly actin polymerization and depolymerization in a pH-sensitive manner. It has the ability to bind G- and F-actin in a 1:1 ratio of cofilin to actin. It is the major component of intranuclear and cytoplasmic actin rods. This chain is Cofilin-1A (cofA), found in Dictyostelium discoideum (Social amoeba).